The chain runs to 474 residues: Glutamate--tRNA ligase (474 aa).

The 'HIGH' region signature appears at 9 to 19 (PSPTGYLHVGG). The 'KMSKS' region motif lies at 240-244 (KLSKR). Residue K243 coordinates ATP.

Belongs to the class-I aminoacyl-tRNA synthetase family. Glutamate--tRNA ligase type 1 subfamily. Monomer.

It is found in the cytoplasm. The catalysed reaction is tRNA(Glu) + L-glutamate + ATP = L-glutamyl-tRNA(Glu) + AMP + diphosphate. Its function is as follows. Catalyzes the attachment of glutamate to tRNA(Glu) in a two-step reaction: glutamate is first activated by ATP to form Glu-AMP and then transferred to the acceptor end of tRNA(Glu). The sequence is that of Glutamate--tRNA ligase from Vibrio cholerae serotype O1 (strain ATCC 39315 / El Tor Inaba N16961).